A 136-amino-acid polypeptide reads, in one-letter code: Large ribosomal subunit protein uL16 (136 aa).

Belongs to the universal ribosomal protein uL16 family. Part of the 50S ribosomal subunit.

Functionally, binds 23S rRNA and is also seen to make contacts with the A and possibly P site tRNAs. This is Large ribosomal subunit protein uL16 from Vibrio atlanticus (strain LGP32) (Vibrio splendidus (strain Mel32)).